A 341-amino-acid polypeptide reads, in one-letter code: Putative amino-acid ABC transporter-binding protein YhdW (341 aa).

The signal sequence occupies residues 1–19 (MKKMMIATLAAASVLLAVA).

This sequence belongs to the bacterial solute-binding protein 3 family.

It is found in the periplasm. In terms of biological role, probably part of the binding-protein-dependent transport system YdhWXYZ for an amino acid. This chain is Putative amino-acid ABC transporter-binding protein YhdW (yhdW), found in Escherichia coli (strain K12).